The primary structure comprises 484 residues: 6-phosphogluconate dehydrogenase, decarboxylating (484 aa).

Residues 10–15 (GLAVMG), 33–35 (NRT), 75–77 (IKA), and asparagine 103 each bind NADP(+). Substrate contacts are provided by residues asparagine 103 and 129–131 (SGG). Lysine 183 serves as the catalytic Proton acceptor. Residue 186–187 (HN) participates in substrate binding. Glutamate 190 serves as the catalytic Proton donor. The substrate site is built by tyrosine 191, lysine 260, arginine 287, arginine 448, and histidine 454.

Belongs to the 6-phosphogluconate dehydrogenase family. Homodimer.

It carries out the reaction 6-phospho-D-gluconate + NADP(+) = D-ribulose 5-phosphate + CO2 + NADPH. The protein operates within carbohydrate degradation; pentose phosphate pathway; D-ribulose 5-phosphate from D-glucose 6-phosphate (oxidative stage): step 3/3. Functionally, catalyzes the oxidative decarboxylation of 6-phosphogluconate to ribulose 5-phosphate and CO(2), with concomitant reduction of NADP to NADPH. This chain is 6-phosphogluconate dehydrogenase, decarboxylating, found in Caenorhabditis elegans.